Here is a 280-residue protein sequence, read N- to C-terminus: Exfoliative toxin A (280 aa).

A signal peptide spans 1–38 (MNNSKIISKVLLSLSLFTVGASAFVIQDELMQKNHAKA). Catalysis depends on charge relay system residues His110, Asp158, and Ser233.

The protein belongs to the peptidase S1B family. The cofactor is Ca(2+).

Functionally, has serine protease-like properties and binds to the skin protein profilaggrin. Cleaves substrates after acidic residues. Exfoliative toxins cause impetigous diseases commonly referred as staphylococcal scalded skin syndrome (SSSS). This is Exfoliative toxin A (eta) from Staphylococcus aureus.